A 1141-amino-acid polypeptide reads, in one-letter code: Eukaryotic translation initiation factor 3 subunit A (1141 aa).

The PCI domain occupies 319 to 501 (LQRMAAHVLL…NSIYFGTDLT (183 aa)). Basic and acidic residues-rich tracts occupy residues 588–623 (QNNA…EERE) and 829–899 (AAEE…RGGD). 2 disordered regions span residues 588–631 (QNNA…QNEI) and 829–1141 (AAEE…VKRR). At Ser908 the chain carries Phosphoserine. Composition is skewed to basic and acidic residues over residues 920–976 (ERND…EPDT), 990–1051 (SRDD…EPQR), 1059–1087 (DAPR…RGDQ), and 1110–1131 (TREE…KAGD).

This sequence belongs to the eIF-3 subunit A family. As to quaternary structure, component of the eukaryotic translation initiation factor 3 (eIF-3) complex. The eIF-3 complex interacts with pix.

It is found in the cytoplasm. Its function is as follows. RNA-binding component of the eukaryotic translation initiation factor 3 (eIF-3) complex, which is involved in protein synthesis of a specialized repertoire of mRNAs and, together with other initiation factors, stimulates binding of mRNA and methionyl-tRNAi to the 40S ribosome. The eIF-3 complex specifically targets and initiates translation of a subset of mRNAs involved in cell proliferation. The sequence is that of Eukaryotic translation initiation factor 3 subunit A from Drosophila simulans (Fruit fly).